Consider the following 235-residue polypeptide: Phosphoribosylformylglycinamidine synthase subunit PurQ (235 aa).

The 231-residue stretch at 4 to 234 folds into the Glutamine amidotransferase type-1 domain; sequence GILVFPGTNC…VQHLTGRVIR (231 aa). Cys86 serves as the catalytic Nucleophile. Catalysis depends on residues His203 and Glu205.

Part of the FGAM synthase complex composed of 1 PurL, 1 PurQ and 2 PurS subunits.

Its subcellular location is the cytoplasm. The catalysed reaction is N(2)-formyl-N(1)-(5-phospho-beta-D-ribosyl)glycinamide + L-glutamine + ATP + H2O = 2-formamido-N(1)-(5-O-phospho-beta-D-ribosyl)acetamidine + L-glutamate + ADP + phosphate + H(+). It catalyses the reaction L-glutamine + H2O = L-glutamate + NH4(+). It functions in the pathway purine metabolism; IMP biosynthesis via de novo pathway; 5-amino-1-(5-phospho-D-ribosyl)imidazole from N(2)-formyl-N(1)-(5-phospho-D-ribosyl)glycinamide: step 1/2. In terms of biological role, part of the phosphoribosylformylglycinamidine synthase complex involved in the purines biosynthetic pathway. Catalyzes the ATP-dependent conversion of formylglycinamide ribonucleotide (FGAR) and glutamine to yield formylglycinamidine ribonucleotide (FGAM) and glutamate. The FGAM synthase complex is composed of three subunits. PurQ produces an ammonia molecule by converting glutamine to glutamate. PurL transfers the ammonia molecule to FGAR to form FGAM in an ATP-dependent manner. PurS interacts with PurQ and PurL and is thought to assist in the transfer of the ammonia molecule from PurQ to PurL. The protein is Phosphoribosylformylglycinamidine synthase subunit PurQ of Symbiobacterium thermophilum (strain DSM 24528 / JCM 14929 / IAM 14863 / T).